The following is a 353-amino-acid chain: Histidinol-phosphate aminotransferase (353 aa).

Residue Lys-211 is modified to N6-(pyridoxal phosphate)lysine.

This sequence belongs to the class-II pyridoxal-phosphate-dependent aminotransferase family. Histidinol-phosphate aminotransferase subfamily. As to quaternary structure, homodimer. Pyridoxal 5'-phosphate is required as a cofactor.

It catalyses the reaction L-histidinol phosphate + 2-oxoglutarate = 3-(imidazol-4-yl)-2-oxopropyl phosphate + L-glutamate. Its pathway is amino-acid biosynthesis; L-histidine biosynthesis; L-histidine from 5-phospho-alpha-D-ribose 1-diphosphate: step 7/9. This is Histidinol-phosphate aminotransferase from Klebsiella pneumoniae subsp. pneumoniae (strain ATCC 700721 / MGH 78578).